The following is a 955-amino-acid chain: UPF0182 protein PMT_0755 (955 aa).

A run of 9 helical transmembrane segments spans residues 25-45 (LLLS…WLWF), 58-78 (WLWQ…CQLW), 107-127 (LLGC…LAWL), 146-166 (IWAL…MLGN), 178-198 (CFCF…ALAI), 214-234 (FGLG…AQLI), 264-284 (CNFL…LLWL), 313-333 (SLAS…TWIQ), and 340-360 (LIAS…APFV).

This sequence belongs to the UPF0182 family.

Its subcellular location is the cell membrane. The sequence is that of UPF0182 protein PMT_0755 from Prochlorococcus marinus (strain MIT 9313).